The sequence spans 270 residues: Probable septum site-determining protein MinC (270 aa).

The segment at 105-129 (DRRAPSSKAADEAPVQQAEPAAPAA) is disordered. Residues 116–129 (EAPVQQAEPAAPAA) are compositionally biased toward low complexity.

This sequence belongs to the MinC family. As to quaternary structure, interacts with MinD and FtsZ.

Functionally, cell division inhibitor that blocks the formation of polar Z ring septums. Rapidly oscillates between the poles of the cell to destabilize FtsZ filaments that have formed before they mature into polar Z rings. Prevents FtsZ polymerization. The sequence is that of Probable septum site-determining protein MinC from Burkholderia pseudomallei (strain 668).